A 168-amino-acid chain; its full sequence is Phosphopantetheine adenylyltransferase (168 aa).

Threonine 17 is a substrate binding site. ATP-binding positions include 17–18 (TF) and histidine 25. Residues lysine 49, leucine 81, and arginine 95 each coordinate substrate. Residues 96–98 (GLR), glutamate 106, and 131–137 (LMYISST) contribute to the ATP site.

Belongs to the bacterial CoaD family. As to quaternary structure, homohexamer. Mg(2+) serves as cofactor.

It is found in the cytoplasm. The catalysed reaction is (R)-4'-phosphopantetheine + ATP + H(+) = 3'-dephospho-CoA + diphosphate. The protein operates within cofactor biosynthesis; coenzyme A biosynthesis; CoA from (R)-pantothenate: step 4/5. In terms of biological role, reversibly transfers an adenylyl group from ATP to 4'-phosphopantetheine, yielding dephospho-CoA (dPCoA) and pyrophosphate. This is Phosphopantetheine adenylyltransferase from Legionella pneumophila (strain Paris).